Reading from the N-terminus, the 496-residue chain is UDP-N-acetylmuramoylalanine--D-glutamate ligase (496 aa).

Position 130–136 (130–136) interacts with ATP; that stretch reads GTNGKTT.

The protein belongs to the MurCDEF family.

It localises to the cytoplasm. It catalyses the reaction UDP-N-acetyl-alpha-D-muramoyl-L-alanine + D-glutamate + ATP = UDP-N-acetyl-alpha-D-muramoyl-L-alanyl-D-glutamate + ADP + phosphate + H(+). The protein operates within cell wall biogenesis; peptidoglycan biosynthesis. Its function is as follows. Cell wall formation. Catalyzes the addition of glutamate to the nucleotide precursor UDP-N-acetylmuramoyl-L-alanine (UMA). This chain is UDP-N-acetylmuramoylalanine--D-glutamate ligase, found in Mycobacterium bovis (strain ATCC BAA-935 / AF2122/97).